An 863-amino-acid chain; its full sequence is Facilitated trehalose transporter Tret1 (863 aa).

The interval 1–208 (MSGRDNRGAG…RIGFQQQKAT (208 aa)) is disordered. Residues 1–398 (MSGRDNRGAG…VYRPTTNPIY (398 aa)) are Cytoplasmic-facing. Positions 28 to 46 (KLKEKLTRAGEELGYHRVE) are enriched in basic and acidic residues. Residues 47–59 (SNLSASNTGTSLD) show a composition bias toward polar residues. Positions 72 to 85 (AAPQRHPQQQFPHL) are enriched in low complexity. Composition is skewed to polar residues over residues 114 to 129 (PPQQIQQQRSALRSSG) and 177 to 187 (KPQQQGNNKAA). Residues serine 254, serine 255, and serine 256 each carry the phosphoserine modification. Residues 286–307 (VLQGSSTDSDEEGDDAEHKRLI) are disordered. 2 positions are modified to phosphoserine: serine 326 and serine 328. The tract at residues 332 to 354 (FLTSRQNFQQQRSISTDSRKSRR) is disordered. Over residues 336 to 347 (RQNFQQQRSIST) the composition is skewed to polar residues. Residues 399-419 (IWTQVLAALSVSLGSLVVGFA) traverse the membrane as a helical segment. Residues 420–446 (SAYTSPALVSMTNTNLTSFVVTPQAAS) are Extracellular-facing. Asparagine 434 carries an N-linked (GlcNAc...) asparagine glycan. A helical membrane pass occupies residues 447–467 (WVGGIMPLAGLAGGIAGGPFI). Topologically, residues 468–479 (EYLGRRNTILAT) are cytoplasmic. The chain crosses the membrane as a helical span at residues 480–500 (AVPFIISWLLIACAVNVVMVL). The Extracellular portion of the chain corresponds to 501–503 (CGR). A helical transmembrane segment spans residues 504-524 (FLAGFCVGIASLSLPVYLGET). Residues 525–530 (VQPEVR) are Cytoplasmic-facing. A helical membrane pass occupies residues 531-551 (GTLGLLPTAFGNIGILLCFVA). Topologically, residues 552–558 (GTYMDWS) are extracellular. The helical transmembrane segment at 559 to 579 (MLAFLGGTLPVPFLILMFLIP) threads the bilayer. The Cytoplasmic segment spans residues 580 to 642 (ETPRWYVSRG…ELLKRSNLKP (63 aa)). Residues 643 to 663 (LSISLGLMFFQQLSGINAVIF) traverse the membrane as a helical segment. Over 664-679 (YTVQIFQDAGSTIDGN) the chain is Extracellular. The helical transmembrane segment at 680-700 (VCTIIVGVVNFMATFIATVLI) threads the bilayer. The Cytoplasmic portion of the chain corresponds to 701–706 (DRAGRK). Residues 707-727 (ILLYVSNVAMILTLFVLGGFF) traverse the membrane as a helical segment. Residues 728-746 (YCKSTGMDTSNVGWLPLSC) lie on the Extracellular side of the membrane. Residues 747–767 (FVVYILGFSLGFGPIPWLMMG) form a helical membrane-spanning segment. The Cytoplasmic segment spans residues 768-773 (EILPAK). The helical transmembrane segment at 774–794 (IRGSAASVATAFNWSCTFVVT) threads the bilayer. Residues 795–807 (KSFQDMIDVMGAH) lie on the Extracellular side of the membrane. A helical membrane pass occupies residues 808 to 828 (GAFWMFGAICFVGLFFVIFYV). At 829–863 (PETQGKTLEDIERKMMGRVRRMSSVANIKPLSFNM) the chain is on the cytoplasmic side. A phosphoserine mark is found at serine 851 and serine 852.

It belongs to the major facilitator superfamily. Sugar transporter (TC 2.A.1.1) family. Trehalose transporter subfamily.

The protein localises to the cell membrane. Its function is as follows. Low-capacity facilitative transporter for trehalose. Does not transport maltose, sucrose or lactose. Mediates the bidirectional transfer of trehalose. Responsible for the transport of trehalose synthesized in the fat body and the incorporation of trehalose into other tissues that require a carbon source, thereby regulating trehalose levels in the hemolymph. This chain is Facilitated trehalose transporter Tret1, found in Drosophila mojavensis (Fruit fly).